The following is a 111-amino-acid chain: Large ribosomal subunit protein uL24 (111 aa).

This sequence belongs to the universal ribosomal protein uL24 family. As to quaternary structure, part of the 50S ribosomal subunit.

One of two assembly initiator proteins, it binds directly to the 5'-end of the 23S rRNA, where it nucleates assembly of the 50S subunit. In terms of biological role, one of the proteins that surrounds the polypeptide exit tunnel on the outside of the subunit. The sequence is that of Large ribosomal subunit protein uL24 from Myxococcus xanthus (strain DK1622).